A 202-amino-acid polypeptide reads, in one-letter code: Putative pre-16S rRNA nuclease (202 aa).

Disordered regions lie at residues 1 to 27 (MSGS…GVRI) and 170 to 202 (GCAA…SDER). A compositionally biased stretch (basic and acidic residues) spans 9–20 (GDSRPGDSRPGD).

Belongs to the YqgF nuclease family.

Its subcellular location is the cytoplasm. Functionally, could be a nuclease involved in processing of the 5'-end of pre-16S rRNA. This Frankia casuarinae (strain DSM 45818 / CECT 9043 / HFP020203 / CcI3) protein is Putative pre-16S rRNA nuclease.